Reading from the N-terminus, the 318-residue chain is Homoserine kinase (318 aa).

An ATP-binding site is contributed by 97–107; the sequence is PIGSGLGSSAC.

Belongs to the GHMP kinase family. Homoserine kinase subfamily.

The protein resides in the cytoplasm. It carries out the reaction L-homoserine + ATP = O-phospho-L-homoserine + ADP + H(+). Its pathway is amino-acid biosynthesis; L-threonine biosynthesis; L-threonine from L-aspartate: step 4/5. Its function is as follows. Catalyzes the ATP-dependent phosphorylation of L-homoserine to L-homoserine phosphate. The sequence is that of Homoserine kinase from Photobacterium profundum (strain SS9).